The chain runs to 294 residues: MNGVINIYKNTGMTSFDVVAMVRRVAKMKKVGHTGTLDPEASGVLPVCLGKATKIIDYIMENKKVYRVNLKLGMVTDTYDLEGEVLREEDASHITKDEILNCINSFVGTIDQVPPMYSALKQNGVRLYELARQGIEVHREARKITIYSIENIKIESNDNIQMDVCCSKGTYIRSLCYDIGEKLNVGATMTALERIQNGPFIKEEAINIEDLTEELLEKHIISIEKALDSFEKITVNEKFGKLLRNGVKVFDNRMYSEEVEFNKLYRVYEDNGVFLGLGKRDEKGFKLEKLLIEE.

Catalysis depends on Asp-38, which acts as the Nucleophile.

The protein belongs to the pseudouridine synthase TruB family. Type 1 subfamily.

The enzyme catalyses uridine(55) in tRNA = pseudouridine(55) in tRNA. Responsible for synthesis of pseudouridine from uracil-55 in the psi GC loop of transfer RNAs. The chain is tRNA pseudouridine synthase B from Clostridium perfringens (strain SM101 / Type A).